The primary structure comprises 89 residues: UPF0237 protein CE1668 (89 aa).

The 75-residue stretch at 4 to 78 (IMTVTGQDHT…KEQGLVIRIQ (75 aa)) folds into the ACT domain.

The protein belongs to the UPF0237 family.

The sequence is that of UPF0237 protein CE1668 from Corynebacterium efficiens (strain DSM 44549 / YS-314 / AJ 12310 / JCM 11189 / NBRC 100395).